A 493-amino-acid chain; its full sequence is MGKPTGFMEIKREKPAERDPLTRLKDWKEYSAPFSEEASKRQGARCMDCGTPFCQIGADINGFTSGCPIYNLIPEWNDLVYRGRWKEALERLLKTNNFPEFTGRVCPAPCEGSCTLAISDPAVSIKNIERTIIDKGFENGWIQPRIPKKRTGKKVAIVGSGPAGLASADQLNQAGHSVTVFERADRAGGLLTYGIPNMKLEKGIVERRIKLLTQEGIDFVTNTEIGVDITADELKEQFDAVILCTGAQKQRDLLIEGRDSKGVHYAMDYLTLATKSYLDSNFKDKQFIDAKGKDVIVIGGGDTGADCVATALRQKAKSVHQFGKHPKLPPARTNDNMWPEQPHVFTLEYAYEEAEAKFGRDPREYSIQTTKMVADKNGKLKELHTIQMEKVKNEHGKYEFRELPGTEKVWPAQLVFIAIGFEGTEQPLLKQFGVNSVNNKISAAYGDYQTNIDGVFAAGDARRGQSLIVWAINEGREVAREVDRYLMGSSVLP.

299 to 313 provides a ligand contact to NADP(+); the sequence is GGGDTGADCVATALR.

Belongs to the glutamate synthase family. As to quaternary structure, aggregate of 4 catalytic active heterodimers, consisting of a large and a small subunit.

The enzyme catalyses 2 L-glutamate + NADP(+) = L-glutamine + 2-oxoglutarate + NADPH + H(+). It functions in the pathway amino-acid biosynthesis; L-glutamate biosynthesis via GLT pathway; L-glutamate from 2-oxoglutarate and L-glutamine (NADP(+) route): step 1/1. The protein operates within energy metabolism; nitrogen metabolism. This is Glutamate synthase [NADPH] small chain (gltB) from Bacillus subtilis (strain 168).